A 108-amino-acid polypeptide reads, in one-letter code: Insertion element IS629 uncharacterized 12 kDa protein S4062 (108 aa).

The protein belongs to the transposase 8 family.

This Shigella flexneri protein is Insertion element IS629 uncharacterized 12 kDa protein S4062.